Reading from the N-terminus, the 505-residue chain is Lysine--tRNA ligase (505 aa).

Mg(2+) contacts are provided by Glu-409 and Glu-416.

It belongs to the class-II aminoacyl-tRNA synthetase family. In terms of assembly, homodimer. The cofactor is Mg(2+).

It localises to the cytoplasm. The catalysed reaction is tRNA(Lys) + L-lysine + ATP = L-lysyl-tRNA(Lys) + AMP + diphosphate. This Latilactobacillus sakei subsp. sakei (strain 23K) (Lactobacillus sakei subsp. sakei) protein is Lysine--tRNA ligase.